We begin with the raw amino-acid sequence, 578 residues long: GPI-anchor transamidase component PIGT (578 aa).

Positions 1-21 (MAAAMPLALLVLLLLGPGGWC) are cleaved as a signal peptide. Residues 22–525 (LAEPPRDSLR…NLPTPDFSMP (504 aa)) are Lumenal-facing. The N-linked (GlcNAc...) asparagine glycan is linked to asparagine 164. 2 cysteine pairs are disulfide-bonded: cysteine 195–cysteine 272 and cysteine 226–cysteine 231. N-linked (GlcNAc...) asparagine glycans are attached at residues asparagine 291 and asparagine 327. A 2-acyl-6-[6-phosphoethanolamine-alpha-D-mannosyl-(1-&gt;2)-6-phosphoethanolamine-alpha-D-mannosyl-(1-&gt;6)-2-phosphoethanolamine-alpha-D-mannosyl-(1-&gt;4)-alpha-D-glucosaminyl]-1-(1-radyl,2-acyl-sn-glycero-3-phospho)-1D-myo-inositol-binding residues include asparagine 461, aspartate 521, serine 523, and asparagine 527. A helical membrane pass occupies residues 526-548 (YNVICLTCTVVAVCYGSFYNLLT). The Cytoplasmic segment spans residues 549–578 (RTFHIEEPRTGGLAKRLANLIRRARGVPPL).

It belongs to the PIGT family. In terms of assembly, heteropentamer. Part of the GPI-anchor transamidase complex, consisting of PIGK, PIGT, PIGS, PIGU and GAA1. The disulfide bond between PIGK/GPI8 and PIGT is important for normal enzyme activity.

The protein resides in the endoplasmic reticulum membrane. The protein operates within glycolipid biosynthesis; glycosylphosphatidylinositol-anchor biosynthesis. Its function is as follows. Component of the glycosylphosphatidylinositol-anchor (GPI-anchor) transamidase (GPI-T) complex that catalyzes the formation of the linkage between a proprotein and a GPI-anchor and participates in GPI anchored protein biosynthesis. May play a crucial role in GPI-T complex assembly in the luminal layer. Binds GPI-anchor. The protein is GPI-anchor transamidase component PIGT of Homo sapiens (Human).